Consider the following 135-residue polypeptide: VapC ribonuclease aq_1901 (135 aa).

The PINc domain occupies 3 to 130; that stretch reads LLDTTVLLDF…FKKLGFKTVN (128 aa). Position 5 (Asp5) interacts with Mg(2+).

Belongs to the PINc/VapC protein family. The cofactor is Mg(2+).

Functionally, toxic component of a type II toxin-antitoxin (TA) system. An RNase. This is VapC ribonuclease aq_1901 from Aquifex aeolicus (strain VF5).